A 535-amino-acid polypeptide reads, in one-letter code: CTP synthase (535 aa).

The amidoligase domain stretch occupies residues 1 to 267 (MTKYIFVTGG…DQIVCDHLKL (267 aa)). Serine 13 contacts CTP. Serine 13 is a UTP binding site. Residue 14–19 (SLGKGI) coordinates ATP. Tyrosine 54 serves as a coordination point for L-glutamine. ATP is bound at residue aspartate 71. Mg(2+)-binding residues include aspartate 71 and glutamate 141. Residues 148 to 150 (DIE), 188 to 193 (KTKPTQ), and lysine 224 contribute to the CTP site. Residues 188 to 193 (KTKPTQ) and lysine 224 each bind UTP. Residue 240–242 (RDA) participates in ATP binding. A Glutamine amidotransferase type-1 domain is found at 292-534 (KIALVGKYVE…VKASLTNKES (243 aa)). L-glutamine is bound at residue glycine 354. Residue cysteine 381 is the Nucleophile; for glutamine hydrolysis of the active site. Residues 382 to 385 (LGMQ), glutamate 405, and arginine 462 each bind L-glutamine. Active-site residues include histidine 507 and glutamate 509.

The protein belongs to the CTP synthase family. In terms of assembly, homotetramer.

It carries out the reaction UTP + L-glutamine + ATP + H2O = CTP + L-glutamate + ADP + phosphate + 2 H(+). It catalyses the reaction L-glutamine + H2O = L-glutamate + NH4(+). The enzyme catalyses UTP + NH4(+) + ATP = CTP + ADP + phosphate + 2 H(+). The protein operates within pyrimidine metabolism; CTP biosynthesis via de novo pathway; CTP from UDP: step 2/2. Its activity is regulated as follows. Allosterically activated by GTP, when glutamine is the substrate; GTP has no effect on the reaction when ammonia is the substrate. The allosteric effector GTP functions by stabilizing the protein conformation that binds the tetrahedral intermediate(s) formed during glutamine hydrolysis. Inhibited by the product CTP, via allosteric rather than competitive inhibition. In terms of biological role, catalyzes the ATP-dependent amination of UTP to CTP with either L-glutamine or ammonia as the source of nitrogen. Regulates intracellular CTP levels through interactions with the four ribonucleotide triphosphates. This chain is CTP synthase, found in Bacillus anthracis (strain A0248).